The following is a 500-amino-acid chain: Probable cytosol aminopeptidase (500 aa).

Mn(2+)-binding residues include lysine 264 and aspartate 269. Lysine 276 is a catalytic residue. Residues aspartate 287, aspartate 346, and glutamate 348 each coordinate Mn(2+). Arginine 350 is a catalytic residue.

It belongs to the peptidase M17 family. Requires Mn(2+) as cofactor.

Its subcellular location is the cytoplasm. The enzyme catalyses Release of an N-terminal amino acid, Xaa-|-Yaa-, in which Xaa is preferably Leu, but may be other amino acids including Pro although not Arg or Lys, and Yaa may be Pro. Amino acid amides and methyl esters are also readily hydrolyzed, but rates on arylamides are exceedingly low.. It catalyses the reaction Release of an N-terminal amino acid, preferentially leucine, but not glutamic or aspartic acids.. Presumably involved in the processing and regular turnover of intracellular proteins. Catalyzes the removal of unsubstituted N-terminal amino acids from various peptides. The protein is Probable cytosol aminopeptidase of Chlamydia abortus (strain DSM 27085 / S26/3) (Chlamydophila abortus).